We begin with the raw amino-acid sequence, 221 residues long: Iron-sulfur cluster repair protein YtfE (221 aa).

It belongs to the RIC family. YtfE subfamily. Homodimer.

The protein resides in the cytoplasm. Functionally, di-iron-containing protein involved in the repair of iron-sulfur clusters damaged by oxidative and nitrosative stress conditions. This Edwardsiella ictaluri (strain 93-146) protein is Iron-sulfur cluster repair protein YtfE.